The sequence spans 320 residues: Olfactory receptor 52W1 (320 aa).

The Extracellular portion of the chain corresponds to M1–T30. N8 carries N-linked (GlcNAc...) asparagine glycosylation. Residues W31–P51 form a helical membrane-spanning segment. Topologically, residues A52–T59 are cytoplasmic. Residues L60–T80 form a helical membrane-spanning segment. At S81–V104 the chain is on the extracellular side. Residues Q105 to C125 traverse the membrane as a helical segment. Residues D126 to A144 are Cytoplasmic-facing. A helical membrane pass occupies residues C145–P165. The Extracellular portion of the chain corresponds to L166–N201. A helical membrane pass occupies residues L202 to S222. At Y223–A242 the chain is on the cytoplasmic side. A helical transmembrane segment spans residues F243–S263. At Y264 to H279 the chain is on the extracellular side. The helical transmembrane segment at I280–A300 threads the bilayer. Topologically, residues R301–L320 are cytoplasmic.

The protein belongs to the G-protein coupled receptor 1 family.

It is found in the cell membrane. Functionally, odorant receptor. The protein is Olfactory receptor 52W1 (OR52W1) of Homo sapiens (Human).